A 132-amino-acid polypeptide reads, in one-letter code: Fluoride-specific ion channel FluC (132 aa).

4 helical membrane-spanning segments follow: residues 5 to 25, 32 to 52, 70 to 90, and 105 to 125; these read LYIA…SGLV, TFPW…GFFA, FVMT…LQTL, and VVGS…AAVG. Na(+) is bound by residues G77 and T80.

Belongs to the fluoride channel Fluc/FEX (TC 1.A.43) family.

It is found in the cell inner membrane. The enzyme catalyses fluoride(in) = fluoride(out). Na(+) is not transported, but it plays an essential structural role and its presence is essential for fluoride channel function. Fluoride-specific ion channel. Important for reducing fluoride concentration in the cell, thus reducing its toxicity. The sequence is that of Fluoride-specific ion channel FluC from Opitutus terrae (strain DSM 11246 / JCM 15787 / PB90-1).